A 66-amino-acid chain; its full sequence is Alpha-conotoxin GIB (66 aa).

The first 21 residues, 1-21 (MGMRMMFTVFLLVVLATTVVS), serve as a signal peptide directing secretion. Residues 22 to 49 (FPSERASDGRDDTAKDEGSDMEKLVEKK) constitute a propeptide that is removed on maturation. 2 disulfide bridges follow: Cys51-Cys56 and Cys52-Cys62. The residue at position 64 (Gly64) is a Glycine amide.

The protein belongs to the conotoxin A superfamily. As to expression, expressed by the venom duct.

It is found in the secreted. Its function is as follows. Alpha-conotoxins act on postsynaptic membranes, they bind to the nicotinic acetylcholine receptors (nAChR) and thus inhibit them. Both the globular (with C1-C3; C2-C4 disulfide pattern) and ribbon (C1-C4; C2-C3) isomers reversibly inhibit human muscle-type alpha-1-beta-1-delta-epsilon/CHRNA1-CHRNB1-CHRND-CHRNE nAChRs (IC(50)=116 nM and IC(50)=643 nM, respectively). Both isomers also inhibit alpha-7/CHRNA7 and alpha-9-alpha-10/CHRNA9-CHRNA10 (IC(50)=1113 nM by globular isomer) nAChRs. This is Alpha-conotoxin GIB from Conus geographus (Geography cone).